The sequence spans 926 residues: Beta-mannosidase A (926 aa).

The first 21 residues, 1–21 (MHVKAETVLALLTPAPPSVVG), serve as a signal peptide directing secretion. N-linked (GlcNAc...) asparagine glycosylation is found at Asn-40, Asn-242, Asn-277, Asn-311, and Asn-342. Glu-474 (proton donor) is an active-site residue. N-linked (GlcNAc...) asparagine glycans are attached at residues Asn-532, Asn-603, Asn-626, Asn-653, Asn-733, Asn-756, Asn-785, Asn-793, Asn-819, and Asn-905.

The protein belongs to the glycosyl hydrolase 2 family. Beta-mannosidase A subfamily. As to quaternary structure, homodimer.

It localises to the secreted. It carries out the reaction Hydrolysis of terminal, non-reducing beta-D-mannose residues in beta-D-mannosides.. It participates in glycan metabolism; N-glycan degradation. Its function is as follows. Exoglycosidase that cleaves the single beta-linked mannose residue from the non-reducing end of beta-mannosidic oligosaccharides of various complexity and length. Involved in the degradation of polymeric mannan and galactomannan. This chain is Beta-mannosidase A (mndA), found in Aspergillus fumigatus (strain ATCC MYA-4609 / CBS 101355 / FGSC A1100 / Af293) (Neosartorya fumigata).